Consider the following 491-residue polypeptide: Carboxypeptidase SOL1 (491 aa).

An N-terminal signal peptide occupies residues 1 to 25 (MSKLRFFQSLLISTVICFFLPSINA). The Extracellular segment spans residues 26–452 (RGGHSDHIHP…LLTQFFTETN (427 aa)). An N-linked (GlcNAc...) asparagine glycan is attached at asparagine 39. One can recognise a Peptidase M14 domain in the interval 64–338 (GYMTNDDLEK…KSMLNLVASL (275 aa)). Zn(2+) is bound by residues histidine 125 and glutamate 128. Substrate is bound by residues 125–128 (HGDE) and 186–187 (NR). Zn(2+) is bound at residue histidine 226. N-linked (GlcNAc...) asparagine glycosylation is present at asparagine 268. Tyrosine 286 serves as a coordination point for substrate. Glutamate 308 serves as the catalytic Proton donor/acceptor. Residues 453–470 (NGITLTLFVVVVFLCFLL) form a helical membrane-spanning segment. Over 471–491 (QRRVRFNLWKQRQSSRRSITV) the chain is Cytoplasmic.

Belongs to the peptidase M14 family. It depends on Zn(2+) as a cofactor. In terms of tissue distribution, expressed in roots, shoots, leaves, flowers and siliques.

Its subcellular location is the endosome membrane. Functionally, possesses in vitro carboxypeptidase activity against the C-terminal arginine and lysine residues. Involved in the maturation of CLE19. Removes the C-terminal arginine residue of CLE19 proprotein. The cleavage of the C-terminal arginine residue is necessary for CLE19 activity in vivo. Is not involved in generating active CLV3. Is not involved in CLE19 or CLV3 perception. This is Carboxypeptidase SOL1 from Arabidopsis thaliana (Mouse-ear cress).